Here is a 413-residue protein sequence, read N- to C-terminus: Chloramphenicol efflux pump Rv0191 (413 aa).

12 helical membrane-spanning segments follow: residues 23–43, 55–75, 89–109, 110–130, 150–170, 176–196, 226–246, 256–276, 286–306, 312–332, 353–373, and 378–398; these read LSVL…PVGA, VVLV…TTVP, LVVS…APNF, AVLA…WAVI, IYIG…AMSL, LAAV…RLAL, VLTM…VVII, NLAW…PLVA, AVIV…ALAF, AATA…ATAV, GLYV…GGLL, and LAMM…GMTV.

The protein belongs to the major facilitator superfamily.

It is found in the cell membrane. With respect to regulation, inhibited by the drug efflux pump inhibitors verapamil, resperine, piperine, chlorpromazine and carbonyl cyanide m-chlorophenylhydrazone (CCCP). In terms of biological role, active efflux pump that plays an important role in chloramphenicol resistance. Overexpression causes pyrazinamide resistance. This chain is Chloramphenicol efflux pump Rv0191, found in Mycobacterium tuberculosis (strain ATCC 25618 / H37Rv).